The chain runs to 494 residues: Ketol-acid reductoisomerase (NADP(+)) (494 aa).

A KARI N-terminal Rossmann domain is found at Leu14–Ser208. Residues Cys45–Gln48, Arg68, Arg76, Ser78, and Asp108–Gln110 contribute to the NADP(+) site. The active site involves His132. An NADP(+)-binding site is contributed by Gly158. KARI C-terminal knotted domains follow at residues Ser209–Ala344 and Ser345–Met487. 4 residues coordinate Mg(2+): Asp217, Glu221, Glu389, and Glu393. Substrate is bound at residue Ser414.

Belongs to the ketol-acid reductoisomerase family. Mg(2+) serves as cofactor.

The catalysed reaction is (2R)-2,3-dihydroxy-3-methylbutanoate + NADP(+) = (2S)-2-acetolactate + NADPH + H(+). The enzyme catalyses (2R,3R)-2,3-dihydroxy-3-methylpentanoate + NADP(+) = (S)-2-ethyl-2-hydroxy-3-oxobutanoate + NADPH + H(+). It functions in the pathway amino-acid biosynthesis; L-isoleucine biosynthesis; L-isoleucine from 2-oxobutanoate: step 2/4. The protein operates within amino-acid biosynthesis; L-valine biosynthesis; L-valine from pyruvate: step 2/4. Functionally, involved in the biosynthesis of branched-chain amino acids (BCAA). Catalyzes an alkyl-migration followed by a ketol-acid reduction of (S)-2-acetolactate (S2AL) to yield (R)-2,3-dihydroxy-isovalerate. In the isomerase reaction, S2AL is rearranged via a Mg-dependent methyl migration to produce 3-hydroxy-3-methyl-2-ketobutyrate (HMKB). In the reductase reaction, this 2-ketoacid undergoes a metal-dependent reduction by NADPH to yield (R)-2,3-dihydroxy-isovalerate. The protein is Ketol-acid reductoisomerase (NADP(+)) of Vibrio atlanticus (strain LGP32) (Vibrio splendidus (strain Mel32)).